We begin with the raw amino-acid sequence, 391 residues long: MSVIKMTDLDLAGKRVFIRADLNVPVKDGKVASDARIRATIPTLKLALEKGAKVMVTSHLGRPTEGEFKPEDSLQPVVDYLNNAELGVPVRLVQNYLDGVDVQAGEIVVLENVRVNKGEKKNDPELGKKYAALCDVFVMDAFGTAHRAQASTYGVAEYAPVACAGPLLAAELDALGKALKEPQRPMLAIVGGSKVSTKLTVLDSLSKIADQLIVGGGIANTFIAAEGHNVGKSLYEEDLIPEAKRLAAATNIPVPVDVRVGTEFSESAPATEKSVTEVRADESIFDIGDKSAEELAKIIKSAKTILWNGPVGVFEFPNFRKGTEVVSNAIAEATANGAFSIAGGGDTLAAIDLFGIKDKISYISTGGGAFLEFVEGKVLPAVEILEKRANG.

Residues 21–23 (DLN), Arg36, 59–62 (HLGR), Arg114, and Arg147 each bind substrate. Residues Lys198, Glu315, and 344–347 (GGDT) each bind ATP.

It belongs to the phosphoglycerate kinase family. In terms of assembly, monomer.

Its subcellular location is the cytoplasm. The enzyme catalyses (2R)-3-phosphoglycerate + ATP = (2R)-3-phospho-glyceroyl phosphate + ADP. Its pathway is carbohydrate degradation; glycolysis; pyruvate from D-glyceraldehyde 3-phosphate: step 2/5. This is Phosphoglycerate kinase from Actinobacillus succinogenes (strain ATCC 55618 / DSM 22257 / CCUG 43843 / 130Z).